Reading from the N-terminus, the 311-residue chain is Malate dehydrogenase (311 aa).

Residues 7–13 and Asp34 contribute to the NAD(+) site; that span reads GAAGGIG. Arg81 and Arg87 together coordinate substrate. Residues Asn94 and 117–119 each bind NAD(+); that span reads ITN. Substrate contacts are provided by Asn119 and Arg153. The active-site Proton acceptor is His177. Met227 serves as a coordination point for NAD(+).

It belongs to the LDH/MDH superfamily. MDH type 1 family. Homodimer.

It catalyses the reaction (S)-malate + NAD(+) = oxaloacetate + NADH + H(+). Catalyzes the reversible oxidation of malate to oxaloacetate. The protein is Malate dehydrogenase of Shewanella sediminis (strain HAW-EB3).